Here is a 399-residue protein sequence, read N- to C-terminus: UDP-galactopyranose mutase (399 aa).

FAD is bound by residues F18, E38, N46, and L66. 4 residues coordinate UDP-alpha-D-galactose: F157, T162, W166, and Y191. 224–225 (DW) serves as a coordination point for FAD. Residues N282, R292, and Y328 each contribute to the UDP-alpha-D-galactose site. R360 serves as a coordination point for FAD. Residue Y366 coordinates UDP-alpha-D-galactose. Residue 367–369 (LDM) participates in FAD binding.

The protein belongs to the UDP-galactopyranose/dTDP-fucopyranose mutase family. Homotetramer. FAD serves as cofactor.

The catalysed reaction is UDP-alpha-D-galactose = UDP-alpha-D-galactofuranose. It functions in the pathway cell wall biogenesis; cell wall polysaccharide biosynthesis. In terms of biological role, catalyzes the interconversion through a 2-keto intermediate of uridine diphosphogalactopyranose (UDP-GalP) into uridine diphosphogalactofuranose (UDP-GalF) which is a key building block for cell wall construction in Mycobacterium tuberculosis. This is UDP-galactopyranose mutase (glf) from Mycobacterium tuberculosis (strain CDC 1551 / Oshkosh).